Here is a 242-residue protein sequence, read N- to C-terminus: Endoplasmic reticulum membrane protein complex subunit 7 (242 aa).

The first 23 residues, 1 to 23 (MAAALWGFFPVLLLLLLSGDVQS), serve as a signal peptide directing secretion. Residues 24-159 (SEVPGAAAEG…IKRESWGWTD (136 aa)) lie on the Lumenal side of the membrane. Residues 160-180 (FLMNPMVMMMVLPLLIFVLLP) traverse the membrane as a helical segment. Residues 181 to 242 (KVVNTSDPDM…TGKSGAGKRR (62 aa)) are Cytoplasmic-facing. The segment at 217–242 (LFSSKSSGKSSSGSSKTGKSGAGKRR) is disordered. The segment covering 219-235 (SSKSSGKSSSGSSKTGK) has biased composition (low complexity).

This sequence belongs to the EMC7 family. Component of the ER membrane protein complex (EMC).

The protein resides in the endoplasmic reticulum membrane. Its function is as follows. Part of the endoplasmic reticulum membrane protein complex (EMC) that enables the energy-independent insertion into endoplasmic reticulum membranes of newly synthesized membrane proteins. Preferentially accommodates proteins with transmembrane domains that are weakly hydrophobic or contain destabilizing features such as charged and aromatic residues. Involved in the cotranslational insertion of multi-pass membrane proteins in which stop-transfer membrane-anchor sequences become ER membrane spanning helices. It is also required for the post-translational insertion of tail-anchored/TA proteins in endoplasmic reticulum membranes. By mediating the proper cotranslational insertion of N-terminal transmembrane domains in an N-exo topology, with translocated N-terminus in the lumen of the ER, controls the topology of multi-pass membrane proteins like the G protein-coupled receptors. By regulating the insertion of various proteins in membranes, it is indirectly involved in many cellular processes. In Homo sapiens (Human), this protein is Endoplasmic reticulum membrane protein complex subunit 7 (EMC7).